The primary structure comprises 554 residues: Bifunctional epoxide hydrolase 2 (554 aa).

The segment at Met-1–Ala-224 is phosphatase. Asp-9 and Asp-11 together coordinate Mg(2+). Lys-55 bears the N6-succinyllysine mark. Thr-123–Asn-124 contributes to the phosphate binding site. Lys-176 carries the N6-acetyllysine; alternate modification. The residue at position 176 (Lys-176) is an N6-succinyllysine; alternate. Position 185 (Asp-185) interacts with Mg(2+). N6-acetyllysine occurs at positions 191 and 215. The interval Asn-233 to Ile-554 is epoxide hydrolase. An AB hydrolase-1 domain is found at Pro-257–Pro-530. Asp-333 acts as the Nucleophile in catalysis. Ser-368 is modified (phosphoserine). Substrate is bound at residue Tyr-381. N6-succinyllysine occurs at positions 420 and 454. Tyr-465 (proton donor) is an active-site residue. Lys-504 carries the N6-succinyllysine modification. A lipid anchor (S-(15-deoxy-Delta12,14-prostaglandin J2-9-yl)cysteine) is attached at Cys-521. Catalysis depends on His-523, which acts as the Proton acceptor. The Microbody targeting signal signature appears at Ser-552 to Ile-554. Lys-553 is subject to N6-succinyllysine.

It belongs to the AB hydrolase superfamily. Epoxide hydrolase family. In terms of assembly, homodimer. It depends on Mg(2+) as a cofactor. In terms of processing, the covalent modification of cysteine by 15-deoxy-Delta12,14-prostaglandin-J2 is autocatalytic and reversible. It may occur as an alternative to other cysteine modifications, such as S-nitrosylation and S-palmitoylation.

It localises to the cytoplasm. It is found in the peroxisome. The enzyme catalyses an epoxide + H2O = an ethanediol. The catalysed reaction is (9S,10S)-10-hydroxy-9-(phosphooxy)octadecanoate + H2O = (9S,10S)-9,10-dihydroxyoctadecanoate + phosphate. It carries out the reaction 8-hydroxy-(11S,12S)-epoxy-(5Z,9E,14Z)-eicosatrienoate + H2O = (8,11R,12S)-trihydroxy-(5Z,9E,14Z)-eicosatrienoate. It catalyses the reaction 10-hydroxy-(11S,12S)-epoxy- (5Z,8Z,14Z)-eicosatrienoate + H2O = (10,11S,12R)-trihydroxy-(5Z,8Z,14Z)-eicosatrienoate. The enzyme catalyses 12-phosphooxy-(9Z)-octadecenoate + H2O = 12-hydroxy-(9Z)-octadecenoate + phosphate. The catalysed reaction is 12-phosphooxy-(9E)-octadecenoate + H2O = 12-hydroxy-(9E)-octadecenoate + phosphate. It carries out the reaction 12-(phosphooxy)octadecanoate + H2O = 12-hydroxyoctadecanoate + phosphate. It catalyses the reaction 8,9-epoxy-(5Z,11Z,14Z)-eicosatrienoate + H2O = 8,9-dihydroxy-(5Z,11Z,14Z)-eicosatrienoate. The enzyme catalyses 11,12-epoxy-(5Z,8Z,14Z)-eicosatrienoate + H2O = 11,12-dihydroxy-(5Z,8Z,14Z)-eicosatrienoate. The catalysed reaction is 14,15-epoxy-(5Z,8Z,11Z)-eicosatrienoate + H2O = 14,15-dihydroxy-(5Z,8Z,11Z)-eicosatrienoate. It carries out the reaction 9,10-epoxy-(12Z)-octadecenoate + H2O = 9,10-dihydroxy-(12Z)-octadecenoate. It catalyses the reaction 1-tetradecanoyl-sn-glycerol 3-phosphate + H2O = 1-tetradecanoyl-sn-glycerol + phosphate. The enzyme catalyses 1-octadecanoyl-sn-glycero-3-phosphate + H2O = 1-octadecanoyl-sn-glycerol + phosphate. The catalysed reaction is 1-(5Z,8Z,11Z,14Z-eicosatetraenoyl)-sn-glycero-3-phosphate + H2O = 1-(5Z,8Z,11Z,14Z-eicosatetraenoyl)-sn-glycerol + phosphate. It carries out the reaction 1-hexadecanoyl-sn-glycero-3-phosphate + H2O = 1-hexadecanoyl-sn-glycerol + phosphate. It catalyses the reaction 1-(9Z-octadecenoyl)-sn-glycero-3-phosphate + H2O = 1-(9Z-octadecenoyl)-sn-glycerol + phosphate. The enzyme catalyses (8S,9R)-epoxy-(5Z,11Z,14Z)-eicosatrienoate + H2O = (8S,9S)-dihydroxy-(5Z,11Z,14Z)-eicosatrienoate. The catalysed reaction is (11S,12R)-epoxy-(5Z,8Z,14Z)-eicosatrienoate + H2O = (11R,12R)-dihydroxy-(5Z,8Z,14Z)-eicosatrienoate. It carries out the reaction (11S,12R)-epoxy-(5Z,8Z,14Z)-eicosatrienoate + H2O = (11S,12S)-dihydroxy-(5Z,8Z,14Z)-eicosatrienoate. It catalyses the reaction (14S,15R)-epoxy-(5Z,8Z,11Z)-eicosatrienoate + H2O = (14R,15R)-dihydroxy-(5Z,8Z,11Z)-eicosatrienoate. The enzyme catalyses (14S,15R)-epoxy-(5Z,8Z,11Z)-eicosatrienoate + H2O = (14S,15S)-dihydroxy-(5Z,8Z,11Z)-eicosatrienoate. The catalysed reaction is (11R,12S)-epoxy-(5Z,8Z,14Z)-eicosatrienoate + H2O = (11S,12S)-dihydroxy-(5Z,8Z,14Z)-eicosatrienoate. It carries out the reaction (11R,12S)-epoxy-(5Z,8Z,14Z)-eicosatrienoate + H2O = (11R,12R)-dihydroxy-(5Z,8Z,14Z)-eicosatrienoate. It catalyses the reaction (8S,9R)-epoxy-(5Z,11Z,14Z)-eicosatrienoate + H2O = (8R,9R)-dihydroxy-(5Z,11Z,14Z)-eicosatrienoate. The enzyme catalyses (14R,15S)-epoxy-(5Z,8Z,11Z)-eicosatrienoate + H2O = (14R,15R)-dihydroxy-(5Z,8Z,11Z)-eicosatrienoate. With respect to regulation, inhibited by 1-(1-acetylpiperidin-4-yl)-3-(4-(trifl uoromethoxy)phenyl)urea (TPAU), 1-cyclohexyl-3-dodecylurea (CDU), 12-(3-adamantan-1-yl-ureido)-dodecanoic acid (AUDA), 1-((3S, 5S, 7S)-adamantan-1-yl)-3-(5-(2-(2-ethoxyethoxy) ethoxy)pentyl)urea (AEPU), N-adamantyl-N[']-cyclohexyl urea (ACU), 4-(((1S, 4S)-4-(3-((3S, 5S, 7S)-adamantan-1-yl) ureido)cyclohexyl)oxy)benzoic acid (c-AUCB), 4-(((1R, 4R)-4-(3-((3S, 5S, 7S)-adamantan-1-yl)ureido)cyclohexyl)oxy)benzoic acid (t-AUCB), 4-(((1R, 4R)-4-(3-(4(trifluoromethoxy)phenyl)ureido)cyclohexyl)oxy)benzoic acid (t-TAUCB) and to a lesser extent by 8-(3-((3S, 5S, 7S)-adamantan-1-yl)ureido) octanoic acid (AUOA). Phosphatase activity is inhibited by dodecyl-phosphate, phospholipids such as phospho-lysophosphatidic acids and fatty acids such as palmitic acid and lauric acid. Functionally, bifunctional enzyme. The C-terminal domain has epoxide hydrolase activity and acts on epoxides (alkene oxides, oxiranes) and arene oxides. Plays a role in xenobiotic metabolism by degrading potentially toxic epoxides. Also determines steady-state levels of physiological mediators. The N-terminal domain has lipid phosphatase activity, with the highest activity towards threo-9,10-phosphonooxy-hydroxy-octadecanoic acid, followed by erythro-9,10-phosphonooxy-hydroxy-octadecanoic acid, 12-phosphonooxy-octadec-9Z-enoic acid and 12-phosphonooxy-octadec-9E-enoic acid. Its function is as follows. Bifunctional enzyme. The C-terminal domain has epoxide hydrolase activity and acts on epoxides (alkene oxides, oxiranes) and arene oxides. Plays a role in xenobiotic metabolism by degrading potentially toxic epoxides. Also determines steady-state levels of physiological mediators. Bifunctional enzyme. The N-terminal domain has lipid phosphatase activity, with the highest activity towards threo-9,10-phosphonooxy-hydroxy-octadecanoic acid, followed by erythro-9,10-phosphonooxy-hydroxy-octadecanoic acid, 12-phosphonooxy-octadec-9Z-enoic acid and 12-phosphonooxy-octadec-9E-enoic acid. Has phosphatase activity toward lyso-glycerophospholipids with also some lower activity toward lysolipids of sphingolipid and isoprenoid phosphates. In Rattus norvegicus (Rat), this protein is Bifunctional epoxide hydrolase 2.